The primary structure comprises 195 residues: FMN-dependent NADH:quinone oxidoreductase (195 aa).

FMN-binding positions include Ser-10, 16–18 (SQS), 91–94 (MYNF), and 135–138 (TRGG).

Belongs to the azoreductase type 1 family. As to quaternary structure, homodimer. The cofactor is FMN.

The enzyme catalyses 2 a quinone + NADH + H(+) = 2 a 1,4-benzosemiquinone + NAD(+). It carries out the reaction N,N-dimethyl-1,4-phenylenediamine + anthranilate + 2 NAD(+) = 2-(4-dimethylaminophenyl)diazenylbenzoate + 2 NADH + 2 H(+). Its function is as follows. Quinone reductase that provides resistance to thiol-specific stress caused by electrophilic quinones. Also exhibits azoreductase activity. Catalyzes the reductive cleavage of the azo bond in aromatic azo compounds to the corresponding amines. This chain is FMN-dependent NADH:quinone oxidoreductase, found in Vibrio vulnificus (strain YJ016).